A 1427-amino-acid chain; its full sequence is ATP-binding cassette transporter abc1 (1427 aa).

Residues 26 to 46 (LLLFYLSLFSLTNLFLIQKLF) traverse the membrane as a helical segment. N-linked (GlcNAc...) asparagine glycosylation is present at Asn-49. The next 9 helical transmembrane spans lie at 63–83 (CLLE…SFYL), 87–107 (AVWW…NILS), 115–135 (LFSW…LISI), 155–175 (LLLP…PLFF), 197–217 (CSIF…WKSW), 262–282 (ILLM…TPLA), 298–318 (GNSP…ASVV), 345–367 (VLTS…YVYN), and 397–417 (MYFL…LAIL). An ABC transmembrane type-1 1 domain is found at 262–549 (ILLMVFLSVL…LASVSRQFIQ (288 aa)). Asn-437 is a glycosylation site (N-linked (GlcNAc...) asparagine). A run of 2 helical transmembrane segments spans residues 489-509 (IIFK…TFAI) and 513-533 (IMGH…FGLL). N-linked (GlcNAc...) asparagine glycans are attached at residues Asn-567, Asn-581, and Asn-601. The region spanning 579-807 (FENTSLSWSP…PSTFFSSNTK (229 aa)) is the ABC transporter 1 domain. The helical transmembrane segment at 609–629 (FTLVVGSTGSGKSTLAMALLG) threads the bilayer. 614–621 (GSTGSGKS) serves as a coordination point for ATP. N-linked (GlcNAc...) asparagine glycosylation is found at Asn-658 and Asn-703. The chain crosses the membrane as a helical span at residues 760–780 (IILFTHNVSLCLPIAENVIVL). N-linked (GlcNAc...) asparagine glycans are attached at residues Asn-782 and Asn-842. An ABC transmembrane type-1 2 domain is found at 862 to 1142 (ILGSILLVMM…FVRANNEILT (281 aa)). The next 3 membrane-spanning stretches (helical) occupy residues 866–886 (ILLV…IALW), 896–916 (LPSS…YFLM), and 973–993 (LLWA…ITML). Asn-994 carries N-linked (GlcNAc...) asparagine glycosylation. Helical transmembrane passes span 995 to 1015 (VTLV…LVYL), 1086 to 1106 (LAIR…LIAL), and 1114 to 1134 (GLVG…LVFV). Asn-1161 and Asn-1184 each carry an N-linked (GlcNAc...) asparagine glycan. The region spanning 1180 to 1422 (VSIKNLTVSY…RRAFWKMCKE (243 aa)) is the ABC transporter 2 domain. Residue 1214–1221 (GRTGSGKS) coordinates ATP. A helical transmembrane segment spans residues 1223–1243 (MGLTLLRFTMIMSGAVEVDGI). N-linked (GlcNAc...) asparagine glycosylation occurs at Asn-1324.

Belongs to the ABC transporter superfamily. ABCC family. Conjugate transporter (TC 3.A.1.208) subfamily.

The protein localises to the membrane. This is ATP-binding cassette transporter abc1 (abc1) from Schizosaccharomyces pombe (strain 972 / ATCC 24843) (Fission yeast).